Reading from the N-terminus, the 688-residue chain is Sodium channel and clathrin linker 1 (688 aa).

Residue A2 is modified to N-acetylalanine. 2 coiled-coil regions span residues 59 to 108 (LIAE…AVEK) and 152 to 673 (QTAS…SVIT). S681 carries the post-translational modification Phosphoserine.

Interacts with SCN10A and clathrin. Identified in a complex containing SCN10A, clathrin and SCLT1.

Its subcellular location is the cytoplasm. It localises to the cytoskeleton. The protein localises to the microtubule organizing center. It is found in the centrosome. The protein resides in the centriole. Functionally, adapter protein that links SCN10A to clathrin. Regulates SCN10A channel activity, possibly by promoting channel internalization. This Mus musculus (Mouse) protein is Sodium channel and clathrin linker 1 (Sclt1).